The chain runs to 176 residues: Oleosin Ara h 14.0103 (176 aa).

Alanine 2 is subject to N-acetylalanine; alternate. 3 helical membrane-spanning segments follow: residues 50-70 (IIAV…SGLS), 75-95 (IIGL…IVPA), and 96-116 (VVTI…GLTG). The tract at residues 156–176 (KTKDAGQEIQTKAQDVKRSSS) is disordered.

Belongs to the oleosin family. Expressed in seeds (at protein level).

It is found in the lipid droplet. The protein localises to the membrane. In terms of biological role, may have a structural role to stabilize the lipid body during desiccation of the seed by preventing coalescence of the oil. Probably interacts with both lipid and phospholipid moieties of lipid bodies. May also provide recognition signals for specific lipase anchorage in lipolysis during seedling growth. This Arachis hypogaea (Peanut) protein is Oleosin Ara h 14.0103.